Here is a 391-residue protein sequence, read N- to C-terminus: Alkanesulfonate monooxygenase (391 aa).

The protein belongs to the SsuD family.

The catalysed reaction is an alkanesulfonate + FMNH2 + O2 = an aldehyde + FMN + sulfite + H2O + 2 H(+). Functionally, catalyzes the desulfonation of aliphatic sulfonates. In Rhodopseudomonas palustris (strain ATCC BAA-98 / CGA009), this protein is Alkanesulfonate monooxygenase.